A 436-amino-acid polypeptide reads, in one-letter code: tRNA-2-methylthio-N(6)-dimethylallyladenosine synthase (436 aa).

The region spanning Arg-5–Gly-121 is the MTTase N-terminal domain. The [4Fe-4S] cluster site is built by Cys-14, Cys-50, Cys-84, Cys-158, Cys-162, and Cys-165. The 230-residue stretch at Ala-144–Ala-373 folds into the Radical SAM core domain. Positions Ala-373–Gly-435 constitute a TRAM domain.

The protein belongs to the methylthiotransferase family. MiaB subfamily. Monomer. [4Fe-4S] cluster is required as a cofactor.

The protein localises to the cytoplasm. It catalyses the reaction N(6)-dimethylallyladenosine(37) in tRNA + (sulfur carrier)-SH + AH2 + 2 S-adenosyl-L-methionine = 2-methylsulfanyl-N(6)-dimethylallyladenosine(37) in tRNA + (sulfur carrier)-H + 5'-deoxyadenosine + L-methionine + A + S-adenosyl-L-homocysteine + 2 H(+). In terms of biological role, catalyzes the methylthiolation of N6-(dimethylallyl)adenosine (i(6)A), leading to the formation of 2-methylthio-N6-(dimethylallyl)adenosine (ms(2)i(6)A) at position 37 in tRNAs that read codons beginning with uridine. In Cereibacter sphaeroides (strain ATCC 17025 / ATH 2.4.3) (Rhodobacter sphaeroides), this protein is tRNA-2-methylthio-N(6)-dimethylallyladenosine synthase.